We begin with the raw amino-acid sequence, 31 residues long: Elongation factor Tu (31 aa).

The protein belongs to the GTP-binding elongation factor family. EF-Tu/EF-1A subfamily. As to quaternary structure, monomer.

It localises to the cytoplasm. In terms of biological role, this protein promotes the GTP-dependent binding of aminoacyl-tRNA to the A-site of ribosomes during protein biosynthesis. This Streptomyces laurentii protein is Elongation factor Tu (tuf).